The chain runs to 229 residues: Nectarin-1 (229 aa).

The first 32 residues, 1 to 32, serve as a signal peptide directing secretion; that stretch reads MAAFGINSKIFQSMEMAILFLLAISIDRYCFA. A disulfide bridge links cysteine 42 with cysteine 57. Residue asparagine 60 is glycosylated (N-linked (GlcNAc...) asparagine). The 149-residue stretch at 69–217 folds into the Cupin type-1 domain; sequence LAISKPGATN…TFQINTEDVQ (149 aa). Mn(2+)-binding residues include histidine 117, histidine 119, glutamate 124, and histidine 163.

Monomer. In the absence of manganese, it forms tetrameric and pentameric forms which show superoxide dismutase activity. Mn(2+) is required as a cofactor. Nectary tissues and to a lower level ovary. Not detected in petals, stems, leaves, roots or other floral tissues.

The protein resides in the secreted. It localises to the extracellular space. It is found in the apoplast. It carries out the reaction 2 superoxide + 2 H(+) = H2O2 + O2. Its function is as follows. May interact with bacterial adhesins thereby protecting the reproductive tissues from microbial attack. Has no oxalate oxidase activity. The protein is Nectarin-1 (NECI) of Nicotiana langsdorffii x Nicotiana sanderae (Ornamental tobacco).